The primary structure comprises 170 residues: Large ribosomal subunit protein uL11 (170 aa).

It belongs to the universal ribosomal protein uL11 family. Part of the ribosomal stalk of the 50S ribosomal subunit. Interacts with L10 and the large rRNA to form the base of the stalk. L10 forms an elongated spine to which L12 dimers bind in a sequential fashion forming a multimeric L10(L12)X complex.

Its function is as follows. Forms part of the ribosomal stalk which helps the ribosome interact with GTP-bound translation factors. This Saccharolobus islandicus (strain M.14.25 / Kamchatka #1) (Sulfolobus islandicus) protein is Large ribosomal subunit protein uL11.